The sequence spans 73 residues: Toxin Td10 (73 aa).

Residues Ile-1 to Cys-7 form the signal peptide. The 63-residue stretch at Lys-8–Gly-70 folds into the LCN-type CS-alpha/beta domain. 4 disulfides stabilise this stretch: Cys-18-Cys-69, Cys-22-Cys-44, Cys-30-Cys-50, and Cys-34-Cys-52. Lys-71 bears the Lysine amide mark.

This sequence belongs to the long (4 C-C) scorpion toxin superfamily. Sodium channel inhibitor family. Beta subfamily. Expressed by the venom gland.

The protein localises to the secreted. Beta toxins bind voltage-independently at site-4 of sodium channels (Nav) and shift the voltage of activation toward more negative potentials thereby affecting sodium channel activation and promoting spontaneous and repetitive firing. The sequence is that of Toxin Td10 from Tityus discrepans (Venezuelan scorpion).